Here is a 423-residue protein sequence, read N- to C-terminus: COP9 signalosome complex subunit 3 (423 aa).

A2 bears the N-acetylalanine mark. Positions 197–365 (NFERALYFYE…GMVSFHDNPE (169 aa)) constitute a PCI domain. Residues 402–423 (QFVQKSMGSQEDDSGNKPSSYS) are disordered. S407, S410, and S423 each carry phosphoserine.

The protein belongs to the CSN3 family. As to quaternary structure, component of the CSN complex, composed of COPS1/GPS1, COPS2, COPS3, COPS4, COPS5, COPS6, COPS7 (COPS7A or COPS7B), COPS8 and COPS9. In the complex, it probably interacts directly with COPS1, COPS4, COPS8 and COPS9. Interacts with CK2 and PKD. Interacts with the translation initiation factor EIF3S6 and IKBKG. Interacts with ERCC6.

The protein localises to the cytoplasm. It localises to the nucleus. Component of the COP9 signalosome complex (CSN), a complex involved in various cellular and developmental processes. The CSN complex is an essential regulator of the ubiquitin (Ubl) conjugation pathway by mediating the deneddylation of the cullin subunits of SCF-type E3 ligase complexes, leading to decrease the Ubl ligase activity of SCF-type complexes such as SCF, CSA or DDB2. The complex is also involved in phosphorylation of p53/TP53, c-jun/JUN, IkappaBalpha/NFKBIA, ITPK1 and IRF8/ICSBP, possibly via its association with CK2 and PKD kinases. CSN-dependent phosphorylation of TP53 and JUN promotes and protects degradation by the Ubl system, respectively. Essential to maintain the survival of epiblast cells and thus the development of the postimplantation embryo. The sequence is that of COP9 signalosome complex subunit 3 (Cops3) from Rattus norvegicus (Rat).